Reading from the N-terminus, the 35-residue chain is Pheromone-binding protein 1 (35 aa).

The protein belongs to the PBP/GOBP family. As to quaternary structure, homodimer. Antenna.

Functionally, this major soluble protein in olfactory sensilla of male moths might serve to solubilize the extremely hydrophobic pheromone molecules and to transport pheromone through the aqueous lymph to receptors located on olfactory cilia. The protein is Pheromone-binding protein 1 of Lymantria dispar (Gypsy moth).